Consider the following 999-residue polypeptide: Sarcoplasmic/endoplasmic reticulum calcium ATPase 3 (999 aa).

Met1 is modified (N-acetylmethionine). At Met1–Ser48 the chain is on the cytoplasmic side. Position 17 is a phosphoserine (Ser17). Thr19 is modified (phosphothreonine). Ser25 bears the Phosphoserine mark. Residues Leu49–Ala69 form a helical membrane-spanning segment. The Lumenal segment spans residues Leu70–Val89. A helical membrane pass occupies residues Glu90 to Arg110. Residues Asn111–Leu253 lie on the Cytoplasmic side of the membrane. Residues Asp254–Val273 form a helical membrane-spanning segment. Over Ile274–Tyr295 the chain is Lumenal. Residues Phe296–Ala313 traverse the membrane as a helical segment. 4 residues coordinate Ca(2+): Val304, Ala305, Ile307, and Glu309. At Val314–Met757 the chain is on the cytoplasmic side. Asp351 acts as the 4-aspartylphosphate intermediate in catalysis. Residues Asp351 and Thr353 each contribute to the Mg(2+) site. Thr353 serves as a coordination point for ATP. The tract at residues Ala370–Gln400 is interaction with phospholamban 1. A Phosphothreonine modification is found at Thr415. The ATP site is built by Glu442, Arg489, Lys515, Arg560, Thr625, Gly626, and Asp627. The residue at position 662 (Ser662) is a Phosphoserine. ATP contacts are provided by Arg678 and Lys684. A Mg(2+)-binding site is contributed by Asp703. Asn706 lines the ATP pocket. A helical transmembrane segment spans residues Lys758–Leu777. Ca(2+) is bound by residues Asn768 and Glu771. Residues Thr778–Leu787 are Lumenal-facing. The helical transmembrane segment at Ile788–Gly808 threads the bilayer. An interaction with phospholamban 2 region spans residues Ile788–Gly808. Positions 796, 799, and 800 each coordinate Ca(2+). Topologically, residues Phe809–Leu828 are cytoplasmic. A helical transmembrane segment spans residues Ile829 to Ala851. The Lumenal portion of the chain corresponds to Ala852–Thr897. A helical transmembrane segment spans residues Thr898 to Ser917. Glu908 contributes to the Ca(2+) binding site. The Cytoplasmic portion of the chain corresponds to Glu918–Asn930. Residues Pro931 to Leu949 traverse the membrane as a helical segment. Residues Val950–Gly964 lie on the Lumenal side of the membrane. Residues Arg965–Lys985 traverse the membrane as a helical segment. The Cytoplasmic portion of the chain corresponds to Tyr986–Lys999.

This sequence belongs to the cation transport ATPase (P-type) (TC 3.A.3) family. Type IIA subfamily. As to quaternary structure, interacts with sarcolipin (SLN). Interacts with phospholamban (PLN). Interacts with myoregulin (MRLN). Interacts with DWORF. Interacts with VMP1. Interacts with TUNAR; the interaction occurs at low levels in low glucose conditions and is increased by high glucose levels. It depends on Mg(2+) as a cofactor.

It is found in the endoplasmic reticulum membrane. Its subcellular location is the sarcoplasmic reticulum membrane. The enzyme catalyses Ca(2+)(in) + ATP + H2O = Ca(2+)(out) + ADP + phosphate + H(+). Its activity is regulated as follows. Inhibited by sarcolipin (SLN), phospholamban (PLN) and myoregulin (MRLN). Enhanced by DWORF; DWORF increases activity by displacing sarcolipin (SLN), phospholamban (PLN) and myoregulin (MRLN). Functionally, this magnesium-dependent enzyme catalyzes the hydrolysis of ATP coupled with the transport of calcium. Transports calcium ions from the cytosol into the sarcoplasmic/endoplasmic reticulum lumen. Contributes to calcium sequestration involved in muscular excitation/contraction. This chain is Sarcoplasmic/endoplasmic reticulum calcium ATPase 3 (Atp2a3), found in Mus musculus (Mouse).